The primary structure comprises 431 residues: Synaptotagmin-11 (431 aa).

Residues 1–15 are Vesicular-facing; the sequence is MAEITNIRPSFDVSP. Residues 16-36 traverse the membrane as a helical segment; it reads VVAGLIGASVLVVCVSVTVFV. Topologically, residues 37 to 431 are cytoplasmic; that stretch reads WSCCHQQAEK…VAKWHSLSEY (395 aa). Residue Ser-134 is modified to Phosphoserine. Residues 134-154 form a disordered region; the sequence is SPITSLTPGESKTTSPSSPEE. A compositionally biased stretch (low complexity) spans 140-151; that stretch reads TPGESKTTSPSS. C2 domains are found at residues 157–279 and 291–426; these read MLGS…QLTR and SRGE…AKWH. Ca(2+)-binding residues include Asp-250, Ser-253, and Asp-256.

Belongs to the synaptotagmin family. Homodimer. Can also form heterodimers. Interacts with PRKN. Interacts (via C2 2 domain) with AGO2 and SND1; the interaction with SND1 is direct. Interacts with KIF1A; the interaction increases in presence of calcium. It depends on Ca(2+) as a cofactor. In terms of processing, ubiquitinated, at least by PRKN, and targeted to the proteasome complex for degradation. Ubiquitination is inhibited by ATP13A2.

It is found in the cytoplasmic vesicle membrane. The protein resides in the perikaryon. Its subcellular location is the golgi apparatus. The protein localises to the trans-Golgi network membrane. It localises to the recycling endosome membrane. It is found in the lysosome membrane. The protein resides in the cytoplasmic vesicle. Its subcellular location is the phagosome. The protein localises to the cell projection. It localises to the axon. It is found in the dendrite. The protein resides in the postsynaptic density. Its subcellular location is the clathrin-coated vesicle membrane. Functionally, synaptotagmin family member involved in vesicular and membrane trafficking which does not bind Ca(2+). Inhibits clathrin-mediated and bulk endocytosis, functions to ensure precision in vesicle retrieval. Plays an important role in dopamine transmission by regulating endocytosis and the vesicle-recycling process. Essential component of a neuronal vesicular trafficking pathway that differs from the synaptic vesicle trafficking pathway but is crucial for development and synaptic plasticity. In macrophages and microglia, inhibits the conventional cytokine secretion, of at least IL6 and TNF, and phagocytosis. In astrocytes, regulates lysosome exocytosis, mechanism required for the repair of injured astrocyte cell membrane. Required for the ATP13A2-mediated regulation of the autophagy-lysosome pathway. The polypeptide is Synaptotagmin-11 (Homo sapiens (Human)).